A 1106-amino-acid polypeptide reads, in one-letter code: Carbamoyl phosphate synthase large chain (1106 aa).

The carboxyphosphate synthetic domain stretch occupies residues 1–401; the sequence is MPKRNDLNKV…AFLKALRSLE (401 aa). Residues arginine 129, arginine 169, glycine 175, glycine 176, arginine 208, valine 210, glutamate 215, glycine 241, valine 242, histidine 243, glutamine 284, and glutamate 298 each contribute to the ATP site. Residues 133–327 enclose the ATP-grasp 1 domain; that stretch reads KTTMNDIGEP…IARVASKIAI (195 aa). Positions 284, 298, and 300 each coordinate Mg(2+). Mn(2+) contacts are provided by glutamine 284, glutamate 298, and asparagine 300. Positions 402–577 are oligomerization domain; the sequence is IDLDDLHQSI…YSAYNEENEA (176 aa). The carbamoyl phosphate synthetic domain stretch occupies residues 578 to 964; sequence IPPSEPTHDK…ALYKAMLASG (387 aa). The region spanning 706–896 is the ATP-grasp 2 domain; the sequence is DQLLNKLGID…MVKIATKAMM (191 aa). ATP-binding residues include arginine 742, glutamine 781, leucine 783, glutamate 787, glycine 812, valine 813, histidine 814, serine 815, glutamine 855, and glutamate 867. Mg(2+) contacts are provided by glutamine 855, glutamate 867, and asparagine 869. Residues glutamine 855, glutamate 867, and asparagine 869 each coordinate Mn(2+). Positions 965-1106 constitute an MGS-like domain; the sequence is FSINLNGGVL…LQDYLKELSN (142 aa). An allosteric domain region spans residues 965–1106; the sequence is FSINLNGGVL…LQDYLKELSN (142 aa).

Belongs to the CarB family. In terms of assembly, composed of two chains; the small (or glutamine) chain promotes the hydrolysis of glutamine to ammonia, which is used by the large (or ammonia) chain to synthesize carbamoyl phosphate. Tetramer of heterodimers (alpha,beta)4. Requires Mg(2+) as cofactor. It depends on Mn(2+) as a cofactor.

It catalyses the reaction hydrogencarbonate + L-glutamine + 2 ATP + H2O = carbamoyl phosphate + L-glutamate + 2 ADP + phosphate + 2 H(+). The enzyme catalyses hydrogencarbonate + NH4(+) + 2 ATP = carbamoyl phosphate + 2 ADP + phosphate + 2 H(+). The protein operates within amino-acid biosynthesis; L-arginine biosynthesis; carbamoyl phosphate from bicarbonate: step 1/1. It functions in the pathway pyrimidine metabolism; UMP biosynthesis via de novo pathway; (S)-dihydroorotate from bicarbonate: step 1/3. Its function is as follows. Large subunit of the glutamine-dependent carbamoyl phosphate synthetase (CPSase). CPSase catalyzes the formation of carbamoyl phosphate from the ammonia moiety of glutamine, carbonate, and phosphate donated by ATP, constituting the first step of 2 biosynthetic pathways, one leading to arginine and/or urea and the other to pyrimidine nucleotides. The large subunit (synthetase) binds the substrates ammonia (free or transferred from glutamine from the small subunit), hydrogencarbonate and ATP and carries out an ATP-coupled ligase reaction, activating hydrogencarbonate by forming carboxy phosphate which reacts with ammonia to form carbamoyl phosphate. This chain is Carbamoyl phosphate synthase large chain, found in Natranaerobius thermophilus (strain ATCC BAA-1301 / DSM 18059 / JW/NM-WN-LF).